The following is a 439-amino-acid chain: Na(+)/H(+) antiporter NhaA (439 aa).

11 helical membrane-spanning segments follow: residues 12–32, 67–87, 103–123, 133–153, 162–182, 186–206, 214–234, 314–334, 341–361, 379–399, and 412–432; these read SMNI…AIIA, MIEF…GLEI, ALPF…YMSI, GLAI…SLLG, IFLT…IALF, HVSY…YFIG, IFFL…GIHS, ILPL…GELV, VAAG…WLAI, GIAL…NLSF, and FGVL…LRIV.

This sequence belongs to the NhaA Na(+)/H(+) (TC 2.A.33) antiporter family.

It is found in the cell inner membrane. It carries out the reaction Na(+)(in) + 2 H(+)(out) = Na(+)(out) + 2 H(+)(in). Functionally, na(+)/H(+) antiporter that extrudes sodium in exchange for external protons. This is Na(+)/H(+) antiporter NhaA from Bacteroides thetaiotaomicron (strain ATCC 29148 / DSM 2079 / JCM 5827 / CCUG 10774 / NCTC 10582 / VPI-5482 / E50).